Here is a 692-residue protein sequence, read N- to C-terminus: Elongation factor G (692 aa).

The tr-type G domain maps to 8-282; sequence ENTRNIGIMA…AVIDYLPSPL (275 aa). Residues 17–24, 81–85, and 135–138 each bind GTP; these read AHIDAGKT, DTPGH, and NKMD.

Belongs to the TRAFAC class translation factor GTPase superfamily. Classic translation factor GTPase family. EF-G/EF-2 subfamily.

The protein localises to the cytoplasm. In terms of biological role, catalyzes the GTP-dependent ribosomal translocation step during translation elongation. During this step, the ribosome changes from the pre-translocational (PRE) to the post-translocational (POST) state as the newly formed A-site-bound peptidyl-tRNA and P-site-bound deacylated tRNA move to the P and E sites, respectively. Catalyzes the coordinated movement of the two tRNA molecules, the mRNA and conformational changes in the ribosome. This Bacillus mycoides (strain KBAB4) (Bacillus weihenstephanensis) protein is Elongation factor G.